A 473-amino-acid chain; its full sequence is Glycosyl hydrolase family 109 protein 2 (473 aa).

Residues 1–31 (MSIFSSRRQFLKSLGLAAGAAAAGNALPGKA) constitute a signal peptide (tat-type signal). Residues 77-78 (GR), Asp-99, 148-151 (WSSH), 168-169 (EV), and Asn-197 contribute to the NAD(+) site. Substrate-binding positions include Tyr-226, Arg-244, 256-259 (YPTH), and Tyr-339. Tyr-256 is an NAD(+) binding site.

The protein belongs to the Gfo/Idh/MocA family. Glycosyl hydrolase 109 subfamily. The cofactor is NAD(+). In terms of processing, predicted to be exported by the Tat system. The position of the signal peptide cleavage has not been experimentally proven.

Functionally, glycosidase. This Akkermansia muciniphila (strain ATCC BAA-835 / DSM 22959 / JCM 33894 / BCRC 81048 / CCUG 64013 / CIP 107961 / Muc) protein is Glycosyl hydrolase family 109 protein 2.